The sequence spans 182 residues: Protein canopy homolog 2 (182 aa).

The N-terminal stretch at 1–20 (MKGWGWLALLLGVLLGTAWA) is a signal peptide. One can recognise a Saposin B-type domain in the interval 24-175 (QDLHCGACRA…KRTDLCDHAL (152 aa)). Intrachain disulfides connect Cys-28–Cys-171, Cys-31–Cys-164, and Cys-86–Cys-137. Position 115 is a phosphoserine (Ser-115). Residues 179–182 (HDEL) carry the Prevents secretion from ER motif.

This sequence belongs to the canopy family. In terms of assembly, interacts with MYLIP/MIR.

Its subcellular location is the endoplasmic reticulum. In terms of biological role, positive regulator of neurite outgrowth by stabilizing myosin regulatory light chain (MRLC). It prevents MIR-mediated MRLC ubiquitination and its subsequent proteasomal degradation. This is Protein canopy homolog 2 (Cnpy2) from Mus musculus (Mouse).